Reading from the N-terminus, the 157-residue chain is Putative electron transport protein YsaA (157 aa).

4 consecutive 4Fe-4S ferredoxin-type domains span residues Asn2–Cys32, Lys48–Gly80, Gly80–Ser109, and Lys112–Val144. Positions 12, 15, 18, 22, 58, 61, 66, 70, 89, 92, 95, 99, 118, 121, 130, and 134 each coordinate [4Fe-4S] cluster.

The chain is Putative electron transport protein YsaA (ysaA) from Escherichia coli (strain K12).